The following is a 203-amino-acid chain: Ribosomal RNA large subunit methyltransferase E (203 aa).

S-adenosyl-L-methionine is bound by residues Gly-59, Trp-61, Asp-79, Asp-97, and Asp-119. Lys-159 serves as the catalytic Proton acceptor.

It belongs to the class I-like SAM-binding methyltransferase superfamily. RNA methyltransferase RlmE family.

The protein localises to the cytoplasm. The enzyme catalyses uridine(2552) in 23S rRNA + S-adenosyl-L-methionine = 2'-O-methyluridine(2552) in 23S rRNA + S-adenosyl-L-homocysteine + H(+). In terms of biological role, specifically methylates the uridine in position 2552 of 23S rRNA at the 2'-O position of the ribose in the fully assembled 50S ribosomal subunit. This is Ribosomal RNA large subunit methyltransferase E from Desulforapulum autotrophicum (strain ATCC 43914 / DSM 3382 / VKM B-1955 / HRM2) (Desulfobacterium autotrophicum).